Reading from the N-terminus, the 320-residue chain is Undecaprenyl-diphosphatase (320 aa).

8 helical membrane passes run 9–29, 82–102, 130–150, 161–181, 191–211, 236–256, 265–285, and 296–316; these read FVLVSAVSAALSVVLFPLEVF, GVAFTAIIQLGSIAAVLWYFW, LGIILGTIPIVFFGLLIKKLI, LGAIAVASIVMSLLLGVGEKL, LTMQDGLLMGLAQALALIPGV, FLLGIPAITLAGLVELKDVFA, LPLIVGVISAAIFSYMAIAGL, and VFIWYRLVFGIAILGAISAGI.

The protein belongs to the UppP family.

The protein localises to the cell inner membrane. The catalysed reaction is di-trans,octa-cis-undecaprenyl diphosphate + H2O = di-trans,octa-cis-undecaprenyl phosphate + phosphate + H(+). Functionally, catalyzes the dephosphorylation of undecaprenyl diphosphate (UPP). Confers resistance to bacitracin. The protein is Undecaprenyl-diphosphatase of Trichormus variabilis (strain ATCC 29413 / PCC 7937) (Anabaena variabilis).